The following is a 583-amino-acid chain: Interactor of constitutive active ROPs 2, chloroplastic (583 aa).

The N-terminal 55 residues, 1–55 (MQTPKPRPGSLEVPQKKSPASTPKTARKLKTSESDPVSSPNTKIRTPKTQSPKVV), are a transit peptide targeting the chloroplast. Disordered regions lie at residues 1–80 (MQTP…PELA) and 101–125 (EALK…NASE). A compositionally biased stretch (polar residues) spans 34-52 (SDPVSSPNTKIRTPKTQSP). 2 coiled-coil regions span residues 74–207 (GKTP…DAKE) and 238–516 (MKMS…AAAT). Basic and acidic residues predominate over residues 102-115 (ALKKEAQDQAEETK). Residues 518–583 (LSGGNNNNNS…IGVLLKKSQK (66 aa)) are disordered. Positions 519-529 (SGGNNNNNSNG) are enriched in low complexity. Ser-540 carries the phosphoserine modification.

It belongs to the ICR family. As to quaternary structure, interacts with ARAC8, ARAC11 and KIN13A in vitro, but not with ICR1 or SEC3A.

It localises to the plastid. It is found in the chloroplast. Its function is as follows. Acts as a scaffold, mediating interaction of ROPs with different proteins. This is Interactor of constitutive active ROPs 2, chloroplastic (ICR2) from Arabidopsis thaliana (Mouse-ear cress).